The following is a 479-amino-acid chain: Ribosomal RNA small subunit methyltransferase F (479 aa).

S-adenosyl-L-methionine-binding positions include 125-131, Glu-149, Asp-176, and Asp-194; that span reads AAAPGSK. Residue Cys-247 is the Nucleophile of the active site.

The protein belongs to the class I-like SAM-binding methyltransferase superfamily. RsmB/NOP family.

Its subcellular location is the cytoplasm. It carries out the reaction cytidine(1407) in 16S rRNA + S-adenosyl-L-methionine = 5-methylcytidine(1407) in 16S rRNA + S-adenosyl-L-homocysteine + H(+). Functionally, specifically methylates the cytosine at position 1407 (m5C1407) of 16S rRNA. This is Ribosomal RNA small subunit methyltransferase F from Shigella boydii serotype 4 (strain Sb227).